The primary structure comprises 93 residues: Auxin-induced protein 10A5 (93 aa).

Belongs to the ARG7 family.

This is Auxin-induced protein 10A5 from Glycine max (Soybean).